A 527-amino-acid polypeptide reads, in one-letter code: Putative zinc finger CCCH domain-containing protein 64 (527 aa).

The interval 103–127 (GQLRSTQTTSKRKAASRKGQREQRV) is disordered. The segment at 213 to 241 (RPGEPFCRYYMKFGECKHMTFCKYNHPKD) adopts a C3H1-type zinc-finger fold.

The sequence is that of Putative zinc finger CCCH domain-containing protein 64 from Oryza sativa subsp. japonica (Rice).